The sequence spans 389 residues: Succinyl-diaminopimelate desuccinylase (389 aa).

H72 provides a ligand contact to Zn(2+). D74 is an active-site residue. D105 serves as a coordination point for Zn(2+). The Proton acceptor role is filled by E144. E145, E173, and H362 together coordinate Zn(2+).

This sequence belongs to the peptidase M20A family. DapE subfamily. Homodimer. Zn(2+) serves as cofactor. The cofactor is Co(2+).

The catalysed reaction is N-succinyl-(2S,6S)-2,6-diaminopimelate + H2O = (2S,6S)-2,6-diaminopimelate + succinate. It participates in amino-acid biosynthesis; L-lysine biosynthesis via DAP pathway; LL-2,6-diaminopimelate from (S)-tetrahydrodipicolinate (succinylase route): step 3/3. Functionally, catalyzes the hydrolysis of N-succinyl-L,L-diaminopimelic acid (SDAP), forming succinate and LL-2,6-diaminopimelate (DAP), an intermediate involved in the bacterial biosynthesis of lysine and meso-diaminopimelic acid, an essential component of bacterial cell walls. The chain is Succinyl-diaminopimelate desuccinylase from Rhodopseudomonas palustris (strain HaA2).